Consider the following 388-residue polypeptide: Putrescine N-methyltransferase 1 (388 aa).

3 stretches are compositionally biased toward polar residues: residues 1–14 (MEVISTNTNGSTIF), 23–39 (GYQNGTSKHQNGHQNGT), and 46–88 (HQNG…GNEL). The interval 1 to 88 (MEVISTNTNG…TISHDNGNEL (88 aa)) is disordered. The PABS domain maps to 99-336 (PGWFSEFSAL…GVIGYMLCST (238 aa)). Residues glutamine 130, glutamate 205, and 236-237 (DG) each bind S-adenosyl-L-methionine. The active-site Proton acceptor is the aspartate 255. An S-adenosyl-L-methionine-binding site is contributed by tyrosine 324.

Belongs to the class I-like SAM-binding methyltransferase superfamily. Spermidine/spermine synthase family. As to expression, mainly expressed in roots.

The enzyme catalyses putrescine + S-adenosyl-L-methionine = N-methylputrescine + S-adenosyl-L-homocysteine + H(+). It participates in alkaloid biosynthesis; nicotine biosynthesis. Involved in the biosynthesis of pyridine alkaloid natural products, leading mainly to the production of anabasine, anatabine, nicotine and nornicotine, effective deterrents against herbivores with antiparasitic and pesticide properties (neurotoxins); nornicotine serves as the precursor in the synthesis of the carcinogen compound N'-nitrosonornicotine (NNN). Methyltransferase that mediates the conversion of putrescine to N-methylputrescine. This Nicotiana attenuata (Coyote tobacco) protein is Putrescine N-methyltransferase 1.